The sequence spans 269 residues: Chymotrypsin-like elastase family member 2A (269 aa).

A signal peptide spans Met-1–Ser-16. Residues Cys-17 to Arg-28 constitute a propeptide, activation peptide. In terms of domain architecture, Peptidase S1 spans Val-29–Glu-267. A disulfide bond links Cys-58 and Cys-74. Residues His-73 and Asp-121 each act as charge relay system in the active site. 3 disulfides stabilise this stretch: Cys-155/Cys-222, Cys-186/Cys-202, and Cys-212/Cys-243. Catalysis depends on Ser-216, which acts as the Charge relay system.

It belongs to the peptidase S1 family. Elastase subfamily. As to quaternary structure, interacts with CPA1. Interacts with SERPINA1. Pancreas.

Its subcellular location is the secreted. It carries out the reaction Preferential cleavage: Leu-|-Xaa, Met-|-Xaa and Phe-|-Xaa. Hydrolyzes elastin.. Elastase that enhances insulin signaling and might have a physiologic role in cellular glucose metabolism. Circulates in plasma and reduces platelet hyperactivation, triggers both insulin secretion and degradation, and increases insulin sensitivity. The protein is Chymotrypsin-like elastase family member 2A (CELA2A) of Bos taurus (Bovine).